Consider the following 96-residue polypeptide: 10.9 kDa protein (96 aa).

The sequence is that of 10.9 kDa protein from Pseudomonas aeruginosa (Bacteriophage Pf1).